A 688-amino-acid polypeptide reads, in one-letter code: Glycine--tRNA ligase beta subunit (688 aa).

The protein belongs to the class-II aminoacyl-tRNA synthetase family. Tetramer of two alpha and two beta subunits.

It is found in the cytoplasm. The catalysed reaction is tRNA(Gly) + glycine + ATP = glycyl-tRNA(Gly) + AMP + diphosphate. The chain is Glycine--tRNA ligase beta subunit from Vibrio atlanticus (strain LGP32) (Vibrio splendidus (strain Mel32)).